Reading from the N-terminus, the 692-residue chain is Pentatricopeptide repeat-containing protein At2g04860 (692 aa).

PPR repeat units follow at residues 12–46 (DLSYFHSLLKSCIHGEISSSPITIFRDLLRSSLTP), 47–83 (NHFTMSIFLQATTTSFNSFKLQVEQVQTHLTKSGLDR), 84–114 (FVYVKTSLLNLYLKKGCVTSAQMLFDEMPER), 115–149 (DTVVWNALICGYSRNGYECDAWKLFIVMLQQGFSP), 150–184 (SATTLVNLLPFCGQCGFVSQGRSVHGVAAKSGLEL), 185–215 (DSQVKNALISFYSKCAELGSAEVLFREMKDK), 216–250 (STVSWNTMIGAYSQSGLQEEAITVFKNMFEKNVEI), 280–314 (DISVVTSLVCAYSRCGCLVSAERLYASAKQDSIVG), 316–345 (TSIVSCYAEKGDMDIAVVYFSKTRQLCMKI), 346–380 (DAVALVGILHGCKKSSHIDIGMSLHGYAIKSGLCT), 381–411 (KTLVVNGLITMYSKFDDVETVLFLFEQLQET), 412–447 (PLISWNSVISGCVQSGRASTAFEVFHQMMLTGGLLP), 448–482 (DAITIASLLAGCSQLCCLNLGKELHGYTLRNNFEN), 483–513 (ENFVCTALIDMYAKCGNEVQAESVFKSIKAP), 514–548 (CTATWNSMISGYSLSGLQHRALSCYLEMREKGLKP), 549–584 (DEITFLGVLSACNHGGFVDEGKICFRAMIKEFGISP), and 585–615 (TLQHYALMVGLLGRACLFTEALYLIWKMDIK). Positions 620–692 (VWGALLSACI…YDGYLGVSQI (73 aa)) are type E motif; degenerate.

This sequence belongs to the PPR family. PCMP-E subfamily.

In Arabidopsis thaliana (Mouse-ear cress), this protein is Pentatricopeptide repeat-containing protein At2g04860 (PCMP-E74).